Reading from the N-terminus, the 198-residue chain is dITP/XTP pyrophosphatase (198 aa).

Substrate is bound at residue 10 to 15 (SGSDHK). 2 residues coordinate Mg(2+): glutamate 43 and aspartate 72. Aspartate 72 (proton acceptor) is an active-site residue. Residues serine 73, 154–157 (FGYD), lysine 177, and 182–183 (HR) each bind substrate.

It belongs to the HAM1 NTPase family. As to quaternary structure, homodimer. It depends on Mg(2+) as a cofactor.

It catalyses the reaction XTP + H2O = XMP + diphosphate + H(+). It carries out the reaction dITP + H2O = dIMP + diphosphate + H(+). The enzyme catalyses ITP + H2O = IMP + diphosphate + H(+). Pyrophosphatase that catalyzes the hydrolysis of nucleoside triphosphates to their monophosphate derivatives, with a high preference for the non-canonical purine nucleotides XTP (xanthosine triphosphate), dITP (deoxyinosine triphosphate) and ITP. Seems to function as a house-cleaning enzyme that removes non-canonical purine nucleotides from the nucleotide pool, thus preventing their incorporation into DNA/RNA and avoiding chromosomal lesions. This is dITP/XTP pyrophosphatase from Leptospira biflexa serovar Patoc (strain Patoc 1 / Ames).